Here is a 490-residue protein sequence, read N- to C-terminus: Cytochrome P450 2C55 (490 aa).

Cys-435 contacts heme.

It belongs to the cytochrome P450 family. Heme is required as a cofactor.

It is found in the endoplasmic reticulum membrane. The protein localises to the microsome membrane. It carries out the reaction an organic molecule + reduced [NADPH--hemoprotein reductase] + O2 = an alcohol + oxidized [NADPH--hemoprotein reductase] + H2O + H(+). In terms of biological role, metabolizes arachidonic acid mainly to 19-hydroxyeicosatetraenoic acid (HETE). This chain is Cytochrome P450 2C55 (Cyp2c55), found in Rattus norvegicus (Rat).